A 467-amino-acid polypeptide reads, in one-letter code: GTPase Der (467 aa).

2 consecutive EngA-type G domains span residues Pro3–Glu167 and Pro179–Arg352. Residues Gly9–Ser16, Asp56–Phe60, Asn119–Glu122, Gly185–Ser192, Asp232–Leu236, and Asn297–Asp300 contribute to the GTP site. Positions Ala353 to His437 constitute a KH-like domain. The interval Arg434 to Gly467 is disordered. Over residues Ala455 to Gly467 the composition is skewed to basic residues.

This sequence belongs to the TRAFAC class TrmE-Era-EngA-EngB-Septin-like GTPase superfamily. EngA (Der) GTPase family. Associates with the 50S ribosomal subunit.

In terms of biological role, GTPase that plays an essential role in the late steps of ribosome biogenesis. This chain is GTPase Der, found in Nitrosomonas europaea (strain ATCC 19718 / CIP 103999 / KCTC 2705 / NBRC 14298).